Reading from the N-terminus, the 481-residue chain is Protein hedgehog (481 aa).

The N-palmitoyl cysteine moiety is linked to residue C93. Ca(2+)-binding residues include E157, E158, D163, T193, E194, D197, and D199. G265 carries Cholesterol glycine ester lipidation.

This sequence belongs to the hedgehog family. In terms of assembly, interacts with shf. The C-terminal part of the hedgehog protein precursor displays an autoproteolysis activity that results in the cleavage of the full-length protein into two parts (N-product and C-product). In addition, the C-terminal part displays a cholesterol transferase activity that results by the covalent attachment of a cholesterol moiety to the C-terminal of the newly generated N-product. The N-product is the active species in both local and long-range signaling, whereas the C-product has no signaling activity. Post-translationally, cholesterylation is required for N-product targeting to lipid rafts and multimerization. In terms of processing, N-palmitoylation by Rasp of the hedgehog N-product, within the secretory pathway, is required for the embryonic and larval patterning activities of the hedgehog signal.

Its subcellular location is the nucleus. The protein resides in the cytoplasm. It is found in the cell membrane. The enzyme catalyses glycyl-L-cysteinyl-[protein] + cholesterol + H(+) = [protein]-C-terminal glycyl cholesterol ester + N-terminal L-cysteinyl-[protein]. The C-terminal part of the hedgehog protein precursor displays an autoproteolysis activity that results in the cleavage of the full-length protein into two parts (N-product and C-product). In addition, the C-terminal part displays a cholesterol transferase activity that results by the covalent attachment of a cholesterol moiety to the C-terminal of the newly generated N-product. Once cleaved, the C-product has no signaling activity and diffuses from the cell. Functionally, the dually lipidated hedgehog protein N-product is a morphogen which is essential for a variety of patterning events during development. Establishes the anterior-posterior axis of the embryonic segments and patterns the larval imaginal disks. Binds to the patched (ptc) receptor, which functions in association with smoothened (smo), to activate the transcription of target genes wingless (wg), decapentaplegic (dpp) and ptc. In the absence of hh, ptc represses the constitutive signaling activity of smo through fused (fu). Essential component of a signaling pathway which regulates the Duox-dependent gut immune response to bacterial uracil; required to activate Cad99C-dependent endosome formation, norpA-dependent Ca2+ mobilization and p38 MAPK, which are essential steps in the Duox-dependent production of reactive oxygen species (ROS) in response to intestinal bacterial infection. During photoreceptor differentiation, it up-regulates transcription of Ubr3, which in turn promotes the hh-signaling pathway by mediating the ubiquitination and degradation of cos. In Drosophila pseudoobscura pseudoobscura (Fruit fly), this protein is Protein hedgehog (hh-1).